We begin with the raw amino-acid sequence, 604 residues long: BTB/POZ domain-containing protein SR1IP1 (604 aa).

The region spanning 27–96 (SDVTVHVGEA…CYGINFDMST (70 aa)) is the BTB domain. Positions 201 to 474 (DWWAEDLTVL…VQVLYYEQQR (274 aa)) constitute an NPH3 domain. Tyrosine 415 is subject to Phosphotyrosine. Disordered stretches follow at residues 478–499 (EVTN…VLPP) and 532–604 (FEKE…HSIS). A coiled-coil region spans residues 500 to 541 (KLSSYTDELSKLKRENQDLKLELLKMKMKLKEFEKESEKKTS). Positions 541-558 (SSSTISTNPSSPISTAST) are enriched in low complexity. Residues 591-604 (GRTKPPKDRRHSIS) are compositionally biased toward basic residues.

It belongs to the NPH3 family. As to quaternary structure, interacts with CAMTA3 and CUL3A.

It participates in protein modification; protein ubiquitination. Functionally, acts as a substrate-specific adapter of an E3 ubiquitin-protein ligase complex (CUL3-RBX1-BTB) which mediates the ubiquitination and subsequent proteasomal degradation of target proteins. Involved in disease resistance. Acts as a substrate adapter that recruits CAMTA3/SR1 for ubiquitination and degradation during pathogen infection. Acts as a positive regulator of plant defense by removing the defense suppressor CAMTA3/SR1. This is BTB/POZ domain-containing protein SR1IP1 from Arabidopsis thaliana (Mouse-ear cress).